Reading from the N-terminus, the 102-residue chain is Urease subunit beta (102 aa).

Belongs to the urease beta subunit family. In terms of assembly, heterotrimer of UreA (gamma), UreB (beta) and UreC (alpha) subunits. Three heterotrimers associate to form the active enzyme.

It is found in the cytoplasm. The catalysed reaction is urea + 2 H2O + H(+) = hydrogencarbonate + 2 NH4(+). It functions in the pathway nitrogen metabolism; urea degradation; CO(2) and NH(3) from urea (urease route): step 1/1. This chain is Urease subunit beta, found in Alteromonas mediterranea (strain DSM 17117 / CIP 110805 / LMG 28347 / Deep ecotype).